Here is a 723-residue protein sequence, read N- to C-terminus: Transient receptor potential cation channel subfamily V member 5 (723 aa).

The Cytoplasmic portion of the chain corresponds to 1-320 (MGVKKPWIQL…SLKWKKYGQP (320 aa)). 5 ANK repeats span residues 72–101 (LGETALHVAALYDNLDAAIMLMETAPYLVT), 110–139 (VGQTALHIAIMNQNVNLVRALLARGASASA), 156–185 (YGEHPLSFAACVGSEEIVRLLIEHGADIRA), 189–222 (LGNTVLHILVLQPNKTFACQMYNLLLSHDGGDHL), and 232–261 (QGLTPFKLAGVEGNTVMFQHLMQKRKHIQW). A helical transmembrane segment spans residues 321-341 (YFCLLGMLYIFYMICFTTCCV). The Extracellular portion of the chain corresponds to 342 to 378 (YRPLKFRDANRTHVRDNTVLEQKPLQEAYVTYQDKVR). A glycan (N-linked (GlcNAc...) asparagine) is linked at N351. Residues 379 to 401 (LVGELVTVIGAVVILLIEIPDIF) form a helical membrane-spanning segment. Residues 402-412 (RVGASRYFGHT) lie on the Cytoplasmic side of the membrane. A helical membrane pass occupies residues 413–435 (VLGGPFHVIIITYASLVLLIMVM). The Extracellular segment spans residues 436 to 441 (RLTSMN). The helical transmembrane segment at 442–462 (GEVVPISMALVLGWCSVMYFS) threads the bilayer. Topologically, residues 463 to 485 (RGFQMLGPFTIMIQKMIFGDLLR) are cytoplasmic. Residues 486-506 (FCWLMAMVILGFASAFYIIFQ) traverse the membrane as a helical segment. Residues 517–537 (SDYPTAMFSTFELFLTIIDGP) constitute an intramembrane region (pore-forming). D535 contacts Ca(2+). The chain crosses the membrane as a helical span at residues 550 to 570 (LTYFAFAIIATLLMLNLFIAM). The Cytoplasmic segment spans residues 571-723 (MGDTHWRVAQ…EGDGEEIYHF (153 aa)). Residues 591-595 (VATTV) form an interaction with S100A10 region. The involved in Ca(2+)-dependent inactivation stretch occupies residues 643-646 (AFKS). The tract at residues 651–674 (EVQEQLSEKQPSGTETGTLARGSV) is disordered. Residues 654–667 (EQLSEKQPSGTETG) show a composition bias toward polar residues. A Phosphothreonine modification is found at T678. S682 carries the phosphoserine modification. The segment at 693–723 (RGWEILRRNTLGHLNLGQDLGEGDGEEIYHF) is involved in Ca(2+)-dependent inactivation.

The protein belongs to the transient receptor (TC 1.A.4) family. TrpV subfamily. TRPV5 sub-subfamily. Homotetramer and probably heterotetramer with TRPV6. Interacts with TRPV6. Interacts with S100A10 and probably with the ANAX2-S100A10 heterotetramer. The interaction with S100A10 is required for the trafficking to the plasma membrane. Interacts with calmodulin. Interacts with BSPRY, which results in its inactivation. Post-translationally, glycosylated. In terms of tissue distribution, detected in kidney (at protein level). Detected in kidney.

It is found in the cell membrane. The protein resides in the apical cell membrane. The enzyme catalyses Ca(2+)(in) = Ca(2+)(out). With respect to regulation, activated by WNK3. In terms of biological role, constitutively active calcium selective cation channel thought to be involved in Ca(2+) reabsorption in kidney and intestine. Required for normal Ca(2+) reabsorption in the kidney distal convoluted tubules. The channel is activated by low internal calcium level and the current exhibits an inward rectification. A Ca(2+)-dependent feedback regulation includes fast channel inactivation and slow current decay. Heteromeric assembly with TRPV6 seems to modify channel properties. TRPV5-TRPV6 heteromultimeric concatemers exhibit voltage-dependent gating. The polypeptide is Transient receptor potential cation channel subfamily V member 5 (Trpv5) (Rattus norvegicus (Rat)).